The sequence spans 174 residues: Adenine phosphoribosyltransferase (174 aa).

Belongs to the purine/pyrimidine phosphoribosyltransferase family. As to quaternary structure, homodimer.

It localises to the cytoplasm. The enzyme catalyses AMP + diphosphate = 5-phospho-alpha-D-ribose 1-diphosphate + adenine. Its pathway is purine metabolism; AMP biosynthesis via salvage pathway; AMP from adenine: step 1/1. Its function is as follows. Catalyzes a salvage reaction resulting in the formation of AMP, that is energically less costly than de novo synthesis. In Photobacterium profundum (strain SS9), this protein is Adenine phosphoribosyltransferase.